The chain runs to 253 residues: Methionine aminopeptidase A (253 aa).

Residue H80 participates in substrate binding. A divalent metal cation is bound by residues D98, D109, and H172. Substrate is bound at residue H179. Positions 205 and 236 each coordinate a divalent metal cation.

This sequence belongs to the peptidase M24A family. Methionine aminopeptidase type 1 subfamily. As to quaternary structure, monomer. The cofactor is Co(2+). Zn(2+) serves as cofactor. Requires Mn(2+) as cofactor. Fe(2+) is required as a cofactor.

It catalyses the reaction Release of N-terminal amino acids, preferentially methionine, from peptides and arylamides.. Functionally, removes the N-terminal methionine from nascent proteins. The N-terminal methionine is often cleaved when the second residue in the primary sequence is small and uncharged (Met-Ala-, Cys, Gly, Pro, Ser, Thr, or Val). Requires deformylation of the N(alpha)-formylated initiator methionine before it can be hydrolyzed. This Synechocystis sp. (strain ATCC 27184 / PCC 6803 / Kazusa) protein is Methionine aminopeptidase A.